The sequence spans 193 residues: Potassium-transporting ATPase KdpC subunit (193 aa).

A helical membrane pass occupies residues 7-27; sequence PLIVVFVVLVAVTGLAYPAVM.

This sequence belongs to the KdpC family. In terms of assembly, the system is composed of three essential subunits: KdpA, KdpB and KdpC.

The protein localises to the cell inner membrane. In terms of biological role, part of the high-affinity ATP-driven potassium transport (or Kdp) system, which catalyzes the hydrolysis of ATP coupled with the electrogenic transport of potassium into the cytoplasm. This subunit acts as a catalytic chaperone that increases the ATP-binding affinity of the ATP-hydrolyzing subunit KdpB by the formation of a transient KdpB/KdpC/ATP ternary complex. The sequence is that of Potassium-transporting ATPase KdpC subunit from Burkholderia mallei (strain NCTC 10247).